The following is a 228-amino-acid chain: Ureidoacrylate amidohydrolase RutB (228 aa).

D23 acts as the Proton acceptor in catalysis. K132 is a catalytic residue. The active-site Nucleophile is C165.

This sequence belongs to the isochorismatase family. RutB subfamily.

It catalyses the reaction (Z)-3-ureidoacrylate + H2O + H(+) = (Z)-3-aminoacrylate + NH4(+) + CO2. It carries out the reaction (Z)-3-ureidoacrylate + H2O = (Z)-3-aminoacrylate + carbamate + H(+). The catalysed reaction is (Z)-2-methylureidoacrylate + H2O + H(+) = (Z)-2-methylaminoacrylate + NH4(+) + CO2. Hydrolyzes ureidoacrylate to form aminoacrylate and carbamate. The carbamate hydrolyzes spontaneously, thereby releasing one of the nitrogen atoms of the pyrimidine ring as ammonia and one of its carbon atoms as CO2. The chain is Ureidoacrylate amidohydrolase RutB from Agrobacterium fabrum (strain C58 / ATCC 33970) (Agrobacterium tumefaciens (strain C58)).